We begin with the raw amino-acid sequence, 92 residues long: UPF0473 protein BCE33L4129 (92 aa).

This sequence belongs to the UPF0473 family.

In Bacillus cereus (strain ZK / E33L), this protein is UPF0473 protein BCE33L4129.